A 401-amino-acid chain; its full sequence is MHNAKGLLGRIVRDKLWRFGYRRSLCSLKLTSEDLDYQVLVEGSGCSRTAILNRPPALNALTTHMGYRLQKLYKNWEEDPNIGFVMMKGSGRAFCAGGDIVSLYHLRTRGSPDAIREFFSSLYSFIYLLGTYLKPHVAILNGVTMGGGTGVSIPGTFRVATDRTIFATPETIIGFHPDAGASFNLSHLPGRLGEYLGLTGLKLSGAEMLACGLATHYIRSEEVPVMEEQLKKLLTDDPSVVESCLEKCAEVAHPEKTGVIRRIDLLEKCFSHDTVEEIIDSLEIEASRRKDTWCITTLRRLKESSPLSLKVALRSIREGRLQTLDQCLIREYRMSLQGLIGPMSGNFCEGVRARLIDKDEAPKWDPPSLEKVSEDMVDDYFCALTPTEPDLDLPVKLRESI.

The N-terminal 26 residues, 1–26, are a transit peptide targeting the mitochondrion; the sequence is MHNAKGLLGRIVRDKLWRFGYRRSLC.

This sequence belongs to the enoyl-CoA hydratase/isomerase family.

The protein localises to the mitochondrion. The chain is 3-hydroxyisobutyryl-CoA hydrolase-like protein 1, mitochondrial from Arabidopsis thaliana (Mouse-ear cress).